The following is a 162-amino-acid chain: Tegument protein BLRF2 (162 aa).

A coiled-coil region spans residues V12 to G43. A disordered region spans residues G121–D162. Basic and acidic residues predominate over residues R151–D162.

The protein belongs to the herpesviridae BLRF2 family. As to quaternary structure, homooligomer; homooligomerizes and binds double-stranded DNA (dsDNA) cooperatively. Interacts with host CGAS.

The protein localises to the virion tegument. It is found in the host cytoplasm. Its function is as follows. Plays a role in the inhibition of host innate immune system by targeting the CGAS enzymatic activity which is the principal cytosolic DNA sensor that detects invading viral DNA. Acts by inhibiting CGAS-DNA phase separation: directly binds double-stranded DNA (dsDNA) in a length dependent but sequence independent manner and is able to form DNA-induced phase separation in infected cells. DNA phase separation of ORF52 mediates disruption of liquid-like droplets in which CGAS is activated, thereby preventing CGAS activity. This is Tegument protein BLRF2 from Epstein-Barr virus (strain GD1) (HHV-4).